Here is a 486-residue protein sequence, read N- to C-terminus: ATP-dependent rRNA helicase RRP3 (486 aa).

A compositionally biased stretch (basic residues) spans 1–11 (MSKVTKQSKSH). The segment at 1-52 (MSKVTKQSKSHKSSELVSLAEKIKQKALENRKQSREESQATEEANTASETEA) is disordered. Residues 17–49 (VSLAEKIKQKALENRKQSREESQATEEANTASE) are a coiled coil. Residues 21-38 (EKIKQKALENRKQSREES) are compositionally biased toward basic and acidic residues. Low complexity predominate over residues 41–52 (TEEANTASETEA). A Q motif motif is present at residues 66 to 94 (SSFRELDLVPELIEACDNLNFTKPTPIQS). Residues 97–269 (IPPALQGKDI…RASLTNPVKC (173 aa)) form the Helicase ATP-binding domain. 110 to 117 (AQTGSGKT) is an ATP binding site. A DEAD box motif is present at residues 216–219 (DEAD). One can recognise a Helicase C-terminal domain in the interval 300–446 (LLNEFIGKTT…SIVLSLRDSV (147 aa)). Residues 459 to 486 (RRNKEKQTRGKGRRSRTATRENMDKEEE) are disordered. Positions 476 to 486 (ATRENMDKEEE) are enriched in basic and acidic residues.

The protein belongs to the DEAD box helicase family. DDX47/RRP3 subfamily. As to quaternary structure, interacts with the SSU processome.

The protein resides in the nucleus. The catalysed reaction is ATP + H2O = ADP + phosphate + H(+). Its function is as follows. ATP-dependent rRNA helicase required for pre-ribosomal RNA processing. Involved in the maturation of the 35S-pre-rRNA and to its cleavage to mature 18S rRNA. In Eremothecium gossypii (strain ATCC 10895 / CBS 109.51 / FGSC 9923 / NRRL Y-1056) (Yeast), this protein is ATP-dependent rRNA helicase RRP3.